The sequence spans 135 residues: Fluoride-specific ion channel FluC (135 aa).

The next 4 membrane-spanning stretches (helical) occupy residues 12–32 (FLVI…LGLS), 42–62 (LGTL…VGIF), 70–90 (LAWK…FSTF), and 106–126 (AIGL…LGLL). Na(+)-binding residues include glycine 82 and threonine 85.

This sequence belongs to the fluoride channel Fluc/FEX (TC 1.A.43) family.

The protein localises to the cell inner membrane. The enzyme catalyses fluoride(in) = fluoride(out). Its activity is regulated as follows. Na(+) is not transported, but it plays an essential structural role and its presence is essential for fluoride channel function. In terms of biological role, fluoride-specific ion channel. Important for reducing fluoride concentration in the cell, thus reducing its toxicity. The sequence is that of Fluoride-specific ion channel FluC from Dechloromonas aromatica (strain RCB).